Consider the following 304-residue polypeptide: Non-specific ribonucleoside hydrolase RihC (304 aa).

The active site involves His-235.

Belongs to the IUNH family. RihC subfamily.

In terms of biological role, hydrolyzes both purine and pyrimidine ribonucleosides with a broad-substrate specificity. The polypeptide is Non-specific ribonucleoside hydrolase RihC (Salmonella paratyphi A (strain ATCC 9150 / SARB42)).